The chain runs to 552 residues: Urocanate hydratase (552 aa).

Residues 50 to 51, glutamine 128, 174 to 176, glutamate 194, arginine 199, 261 to 265, 271 to 272, and tyrosine 320 contribute to the NAD(+) site; these read GG, GMG, QTSAH, and YI. Residue cysteine 408 is part of the active site. Glycine 490 serves as a coordination point for NAD(+).

The protein belongs to the urocanase family. NAD(+) is required as a cofactor.

It localises to the cytoplasm. The catalysed reaction is 4-imidazolone-5-propanoate = trans-urocanate + H2O. The protein operates within amino-acid degradation; L-histidine degradation into L-glutamate; N-formimidoyl-L-glutamate from L-histidine: step 2/3. Catalyzes the conversion of urocanate to 4-imidazolone-5-propionate. The sequence is that of Urocanate hydratase from Bdellovibrio bacteriovorus (strain ATCC 15356 / DSM 50701 / NCIMB 9529 / HD100).